The chain runs to 854 residues: Transcription factor asR3 (854 aa).

A DNA-binding region (zn(2)-C6 fungal-type) is located at residues 19–45; the sequence is CWECRRRKIKCDRNDPCAHCIRHETQC. The disordered stretch occupies residues 56–156; sequence TDSDVSRTRP…SLSTNTSPSA (101 aa). 2 stretches are compositionally biased toward polar residues: residues 78–90 and 125–145; these read ASGSNSAVATRPS and LNPSQDVSAPSTQVLQPSSRG. Low complexity predominate over residues 146–156; that stretch reads PSLSTNTSPSA.

The protein localises to the nucleus. Its function is as follows. Transcription factor; part of the gene cluster that mediates the biosynthesis of xenovulene A, an unusual meroterpenoid that has potent inhibitory effects on the human gamma-aminobutyrate A (GABAA) benzodiazepine receptor. The polypeptide is Transcription factor asR3 (Sarocladium schorii (Acremonium strictum (strain IMI 501407))).